Reading from the N-terminus, the 338-residue chain is UPF0324 membrane protein TauZ (338 aa).

9 helical membrane passes run 36 to 55, 75 to 92, 96 to 118, 125 to 147, 162 to 184, 223 to 245, 255 to 277, 290 to 309, and 314 to 336; these read YGAP…NFLA, LGVA…LAAL, AIAL…SRLV, ALLT…AAVL, LSVT…LFGF, LIRV…ARGL, PLLP…GLIP, WALL…GKML, and GAIA…GLHL.

Belongs to the UPF0324 family.

It is found in the cell membrane. This Paracoccus pantotrophus (Thiosphaera pantotropha) protein is UPF0324 membrane protein TauZ (tauZ).